Consider the following 220-residue polypeptide: Inner membrane-spanning protein YciB (220 aa).

6 consecutive transmembrane segments (helical) span residues Glu20–Ala40, Ile57–Ala77, Leu86–Trp106, Leu123–Phe143, Lys156–Trp176, and Phe187–Ile207.

The protein belongs to the YciB family.

The protein resides in the cell inner membrane. Functionally, plays a role in cell envelope biogenesis, maintenance of cell envelope integrity and membrane homeostasis. This chain is Inner membrane-spanning protein YciB, found in Brucella melitensis biotype 2 (strain ATCC 23457).